The following is a 704-amino-acid chain: Lebercilin (704 aa).

Residues 1–14 (MGERARSPDIEQGK) are compositionally biased toward basic and acidic residues. Residues 1–80 (MGERARSPDI…VSPKAVPSKK (80 aa)) form a disordered region. Residue Ser-7 is modified to Phosphoserine. Over residues 25–40 (SSDLGSSPQSSGPSSP) the composition is skewed to low complexity. Ser-48 is subject to Phosphoserine. Basic and acidic residues predominate over residues 49-63 (TREKNPKRHLSDNQV). A coiled-coil region spans residues 105-300 (KRVLSARLLK…KEKELDIKNI (196 aa)). Disordered regions lie at residues 389 to 417 (QEGK…AREE) and 476 to 661 (ELQD…GDEE). The segment covering 404–417 (QEARKPESEWAREE) has biased composition (basic and acidic residues). The stretch at 448–479 (AQSVDKFEDEAERLKTEMLLAKLNEINKELQD) forms a coiled coil. A compositionally biased stretch (basic and acidic residues) spans 496-505 (SKLHSPDRST). The span at 570 to 591 (GKSNPPSQKSSLLDFQSNSSES) shows a compositional bias: polar residues. The segment covering 592 to 608 (PSKDSLDLMSRKEKKAT) has biased composition (basic and acidic residues). Over residues 617 to 627 (SASNTSVSSKS) the composition is skewed to low complexity.

It belongs to the LCA5 family. Interacts with NINL. Interacts with OFD1. Interacts with FAM161A. Interacts with components of the IFT complex B. Detected in several tissues.

The protein resides in the cytoplasm. The protein localises to the cytoskeleton. It is found in the cilium axoneme. It localises to the cilium basal body. Its subcellular location is the cell projection. The protein resides in the cilium. Functionally, involved in intraflagellar protein (IFT) transport in photoreceptor cilia. This chain is Lebercilin (Lca5), found in Mus musculus (Mouse).